Consider the following 485-residue polypeptide: NADH-quinone oxidoreductase subunit N (485 aa).

14 consecutive transmembrane segments (helical) span residues 8–28 (LIAL…MLSI), 35–55 (FLNA…LWFV), 71–91 (GFAM…CTFA), 105–125 (FYLL…ANHL), 127–147 (SLFL…GYAF), 159–179 (YTIL…LVYA), 203–223 (LLAG…LVPF), 235–255 (PAPV…GVVM), 271–291 (VVLA…ALSQ), 297–317 (LLGY…IALQ), 326–346 (VGVY…VVSL), 373–393 (AAVM…LGFI), 408–430 (WWLV…RVAV), and 455–475 (IVVL…QPLI).

Belongs to the complex I subunit 2 family. As to quaternary structure, NDH-1 is composed of 13 different subunits. Subunits NuoA, H, J, K, L, M, N constitute the membrane sector of the complex.

The protein localises to the cell inner membrane. The catalysed reaction is a quinone + NADH + 5 H(+)(in) = a quinol + NAD(+) + 4 H(+)(out). Functionally, NDH-1 shuttles electrons from NADH, via FMN and iron-sulfur (Fe-S) centers, to quinones in the respiratory chain. The immediate electron acceptor for the enzyme in this species is believed to be ubiquinone. Couples the redox reaction to proton translocation (for every two electrons transferred, four hydrogen ions are translocated across the cytoplasmic membrane), and thus conserves the redox energy in a proton gradient. The sequence is that of NADH-quinone oxidoreductase subunit N from Shigella dysenteriae serotype 1 (strain Sd197).